Reading from the N-terminus, the 329-residue chain is MTLVSFFSFLSKPLIMLLSNSSWRLSQPSFLLVGIPGLEESQHWIALPLGILYLLALVGNVTILFIIWMDPSLHQSMYLFLSMLAAIDLVLASSTAPKALAVLLVHAHEIGYIVCLIQMFFIHAFSSMESGVLVAMALDRYVAICHPLHHSTILHPGVIGRIGMVVLVRGLLLLIPFPILLGTLIFCQATIIGHAYCEHMAVVKLACSETTVNRAYGLTMALLVIGLDVLAIGVSYAHILQAVLKVPGSEARLKAFSTCGSHICVILVFYVPGIFSFLTHRFGHHVPHHVHVLLATRYLLMPPALNPLVYGVKTQQIRQRVLRVFTQKD.

The Extracellular segment spans residues 1-43 (MTLVSFFSFLSKPLIMLLSNSSWRLSQPSFLLVGIPGLEESQH). Asparagine 20 carries an N-linked (GlcNAc...) asparagine glycan. The chain crosses the membrane as a helical span at residues 44 to 64 (WIALPLGILYLLALVGNVTIL). The Cytoplasmic portion of the chain corresponds to 65 to 72 (FIIWMDPS). Residues 73–93 (LHQSMYLFLSMLAAIDLVLAS) form a helical membrane-spanning segment. The Extracellular segment spans residues 94-117 (STAPKALAVLLVHAHEIGYIVCLI). Residues cysteine 115 and cysteine 207 are joined by a disulfide bond. Residues 118-138 (QMFFIHAFSSMESGVLVAMAL) form a helical membrane-spanning segment. Topologically, residues 139-157 (DRYVAICHPLHHSTILHPG) are cytoplasmic. A helical transmembrane segment spans residues 158 to 178 (VIGRIGMVVLVRGLLLLIPFP). Residues 179–214 (ILLGTLIFCQATIIGHAYCEHMAVVKLACSETTVNR) lie on the Extracellular side of the membrane. Residues 215-235 (AYGLTMALLVIGLDVLAIGVS) form a helical membrane-spanning segment. Topologically, residues 236–255 (YAHILQAVLKVPGSEARLKA) are cytoplasmic. A helical membrane pass occupies residues 256–276 (FSTCGSHICVILVFYVPGIFS). Over 277 to 291 (FLTHRFGHHVPHHVH) the chain is Extracellular. The helical transmembrane segment at 292 to 312 (VLLATRYLLMPPALNPLVYGV) threads the bilayer. Over 313–329 (KTQQIRQRVLRVFTQKD) the chain is Cytoplasmic.

This sequence belongs to the G-protein coupled receptor 1 family.

It is found in the cell membrane. Its function is as follows. Odorant receptor. This chain is Olfactory receptor 52L1 (OR52L1), found in Homo sapiens (Human).